Reading from the N-terminus, the 367-residue chain is MWGSRAQQSGPDRGGACLLAAFLLCFSLLHAQDYTPSQTPPPTSNTSLKPRGRVQKELCGKTKFQGKIYGGQIAKAERWPWQASLIFRGRHICGAVLIDKTWLLSAAHCFQRSLTPSDYRILLGYNQLSNPSNYSRQMTVNKVILHEDYSKLSRLEKNIVLIQLHHPVIYSTHIFPACVPDGTTKVSPNNLCWISGWGMLSADKFLQAPFPLLDAEVSLIDEEECTTFFQTPEVSITEYDVIKDDVLCAGDLTNQKSSCRGDSGGPLVCFLNSFWYVVGLANWNGACLEPIHSPNIFTKVSYFSDWIKQKKANTPAADVSSAPLEEMASSLRGWGNYSAGITLKPRISTTLLSSQALLLQSIWLRIL.

The first 31 residues, 1–31, serve as a signal peptide directing secretion; sequence MWGSRAQQSGPDRGGACLLAAFLLCFSLLHA. Residues 68–312 form the Peptidase S1 domain; the sequence is IYGGQIAKAE…FSDWIKQKKA (245 aa). 4 cysteine pairs are disulfide-bonded: Cys-93–Cys-109, Cys-192–Cys-269, Cys-225–Cys-248, and Cys-259–Cys-287.

Belongs to the peptidase S1 family. As to expression, expressed in testis. More specifically, abundantly expressed in the haploid round spermatid.

Its subcellular location is the cytoplasmic vesicle. The protein resides in the secretory vesicle. It localises to the acrosome. It is found in the secreted. Functionally, may play an important role in the sperm/egg interaction; released during the acrosome reaction. This is Inactive serine protease 39 (Prss39) from Mus musculus (Mouse).